The sequence spans 764 residues: Putative alpha-1,3-mannosyltransferase MNN13 (764 aa).

The Cytoplasmic portion of the chain corresponds to 1-13 (MIKPILGTKKIRR). The chain crosses the membrane as a helical span at residues 14-34 (VICIIIGLFCILLLIGIFKHN). The Lumenal segment spans residues 35-764 (STNSVNNEAS…YLGDVWVGKY (730 aa)). N-linked (GlcNAc...) asparagine glycans are attached at residues Asn-45 and Asn-204.

The protein belongs to the MNN1/MNT family.

Its subcellular location is the golgi apparatus membrane. It participates in protein modification; protein glycosylation. Functionally, responsible for addition of the terminal mannose residues to the outer chain of core N-linked polysaccharides and to O-linked mannotriose. Implicated in late Golgi modifications. The chain is Putative alpha-1,3-mannosyltransferase MNN13 (MNN13) from Candida albicans (strain SC5314 / ATCC MYA-2876) (Yeast).